A 303-amino-acid polypeptide reads, in one-letter code: Probable endonuclease 4 (303 aa).

His-75, His-115, Glu-151, Asp-185, His-188, His-221, Asp-234, His-236, and Glu-266 together coordinate Zn(2+).

It belongs to the AP endonuclease 2 family. Zn(2+) serves as cofactor.

It carries out the reaction Endonucleolytic cleavage to 5'-phosphooligonucleotide end-products.. Its function is as follows. Endonuclease IV plays a role in DNA repair. It cleaves phosphodiester bonds at apurinic or apyrimidinic (AP) sites, generating a 3'-hydroxyl group and a 5'-terminal sugar phosphate. This chain is Probable endonuclease 4, found in Ureaplasma parvum serovar 3 (strain ATCC 700970).